The chain runs to 1295 residues: Phosphoribosylformylglycinamidine synthase (1295 aa).

The tract at residues 305-327 (WPGAATGSGGEIRDEGATGRGAK) is disordered. Residues 307–318 (GAATGSGGEIRD), 386–388 (TGY), and A678 contribute to the ATP site. The Mg(2+) site is built by D679, E718, N722, and D884. S886 is an ATP binding site. In terms of domain architecture, Glutamine amidotransferase type-1 spans 1042-1295 (VAVLREQGVN…IFRNARKQLG (254 aa)). Catalysis depends on C1135, which acts as the Nucleophile. Catalysis depends on residues H1260 and E1262.

In the N-terminal section; belongs to the FGAMS family. In terms of assembly, monomer.

It is found in the cytoplasm. It catalyses the reaction N(2)-formyl-N(1)-(5-phospho-beta-D-ribosyl)glycinamide + L-glutamine + ATP + H2O = 2-formamido-N(1)-(5-O-phospho-beta-D-ribosyl)acetamidine + L-glutamate + ADP + phosphate + H(+). It participates in purine metabolism; IMP biosynthesis via de novo pathway; 5-amino-1-(5-phospho-D-ribosyl)imidazole from N(2)-formyl-N(1)-(5-phospho-D-ribosyl)glycinamide: step 1/2. Phosphoribosylformylglycinamidine synthase involved in the purines biosynthetic pathway. Catalyzes the ATP-dependent conversion of formylglycinamide ribonucleotide (FGAR) and glutamine to yield formylglycinamidine ribonucleotide (FGAM) and glutamate. This Salmonella paratyphi A (strain ATCC 9150 / SARB42) protein is Phosphoribosylformylglycinamidine synthase.